A 383-amino-acid polypeptide reads, in one-letter code: Ovalbumin (383 aa).

The residue at position 2 (Gly2) is an N-acetylglycine. Residues His22 to Asp48 constitute a signal peptide (not cleaved). Residue Ser69 is modified to Phosphoserine. Cys74 and Cys121 form a disulfide bridge. N-linked (GlcNAc...) asparagine glycans are attached at residues Asn293 and Asn312. Residue Ser345 is modified to Phosphoserine.

It belongs to the serpin family. Ov-serpin subfamily. Post-translationally, the signal sequence is not cleaved. The functional signal for membrane translocation of ovalbumin becomes accessible when the nascent chain is 50 to 60 residues long. The hydrophobic sequence which lies between residues 27 and 43 folds back on the preceding residues to form an amphipathic hairpin structure which is the signal element recognized by the membrane. Major protein of egg white.

Its subcellular location is the secreted. In terms of biological role, storage protein of egg white. Lack protease inhibitory activity. The sequence is that of Ovalbumin (SERPINB14) from Coturnix coturnix (Common quail).